Reading from the N-terminus, the 175-residue chain is Nascent polypeptide-associated complex subunit beta (175 aa).

Disordered stretches follow at residues 1-36 (MDKE…SQGD) and 129-175 (RQAA…EELE). The 68-residue stretch at 34 to 101 (QGDDRKLQAA…GQTKELTELV (68 aa)) folds into the NAC-A/B domain. Residues 149–163 (EGDDEIPDLVDNFDE) show a composition bias toward acidic residues. Residues 164–175 (AEVKKSDLEELE) show a composition bias toward basic and acidic residues.

This sequence belongs to the NAC-beta family. In terms of assembly, part of the nascent polypeptide-associated complex (NAC), consisting of EGD2 and EGD1. NAC associates with ribosomes via EGD1.

The protein localises to the cytoplasm. It localises to the nucleus. Functionally, component of the nascent polypeptide-associated complex (NAC), a dynamic component of the ribosomal exit tunnel, protecting the emerging polypeptides from interaction with other cytoplasmic proteins to ensure appropriate nascent protein targeting. The NAC complex also promotes mitochondrial protein import by enhancing productive ribosome interactions with the outer mitochondrial membrane and blocks the inappropriate interaction of ribosomes translating non-secretory nascent polypeptides with translocation sites in the membrane of the endoplasmic reticulum. EGD1 may act as a transcription factor that exert a negative effect on the expression of several genes that are transcribed by RNA polymerase II. This is Nascent polypeptide-associated complex subunit beta (EGD1) from Cryptococcus neoformans var. neoformans serotype D (strain B-3501A) (Filobasidiella neoformans).